A 90-amino-acid chain; its full sequence is Small ribosomal subunit protein uS17 (90 aa).

The protein belongs to the universal ribosomal protein uS17 family. Part of the 30S ribosomal subunit.

Functionally, one of the primary rRNA binding proteins, it binds specifically to the 5'-end of 16S ribosomal RNA. This is Small ribosomal subunit protein uS17 from Paraburkholderia phytofirmans (strain DSM 17436 / LMG 22146 / PsJN) (Burkholderia phytofirmans).